We begin with the raw amino-acid sequence, 211 residues long: Uridine kinase (211 aa).

12 to 19 (GGSGSGKT) lines the ATP pocket.

It belongs to the uridine kinase family.

It localises to the cytoplasm. It carries out the reaction uridine + ATP = UMP + ADP + H(+). The catalysed reaction is cytidine + ATP = CMP + ADP + H(+). The protein operates within pyrimidine metabolism; CTP biosynthesis via salvage pathway; CTP from cytidine: step 1/3. It functions in the pathway pyrimidine metabolism; UMP biosynthesis via salvage pathway; UMP from uridine: step 1/1. The chain is Uridine kinase from Bacillus velezensis (strain DSM 23117 / BGSC 10A6 / LMG 26770 / FZB42) (Bacillus amyloliquefaciens subsp. plantarum).